Here is a 592-residue protein sequence, read N- to C-terminus: A-type ATP synthase subunit A (592 aa).

236–243 (GPFGSGKT) serves as a coordination point for ATP.

Belongs to the ATPase alpha/beta chains family. As to quaternary structure, has multiple subunits with at least A(3), B(3), C, D, E, F, H, I and proteolipid K(x).

The protein resides in the cell membrane. It catalyses the reaction ATP + H2O + 4 H(+)(in) = ADP + phosphate + 5 H(+)(out). Its function is as follows. Component of the A-type ATP synthase that produces ATP from ADP in the presence of a proton gradient across the membrane. The A chain is the catalytic subunit. The protein is A-type ATP synthase subunit A of Methanopyrus kandleri (strain AV19 / DSM 6324 / JCM 9639 / NBRC 100938).